The primary structure comprises 394 residues: Elongation factor Tu (394 aa).

A tr-type G domain is found at 10-204; the sequence is KPHINIGTIG…AVDDNIPTPE (195 aa). The interval 19–26 is G1; it reads GHVDHGKT. 19–26 lines the GTP pocket; that stretch reads GHVDHGKT. Threonine 26 lines the Mg(2+) pocket. A G2 region spans residues 60–64; sequence GITIN. A G3 region spans residues 81-84; sequence DCPG. Residues 81 to 85 and 136 to 139 each bind GTP; these read DCPGH and NKID. The G4 stretch occupies residues 136–139; sequence NKID. The G5 stretch occupies residues 174-176; the sequence is SAL.

It belongs to the TRAFAC class translation factor GTPase superfamily. Classic translation factor GTPase family. EF-Tu/EF-1A subfamily. As to quaternary structure, monomer.

Its subcellular location is the cytoplasm. The enzyme catalyses GTP + H2O = GDP + phosphate + H(+). GTP hydrolase that promotes the GTP-dependent binding of aminoacyl-tRNA to the A-site of ribosomes during protein biosynthesis. This chain is Elongation factor Tu, found in Chlamydia caviae (strain ATCC VR-813 / DSM 19441 / 03DC25 / GPIC) (Chlamydophila caviae).